A 531-amino-acid chain; its full sequence is Cytochrome P450 monooxygenase peniB (531 aa).

The chain crosses the membrane as a helical span at residues 30–48 (ILSIAAVVFLGYLLLRPLF). Residue Cys-445 participates in heme binding.

Belongs to the cytochrome P450 family. Requires heme as cofactor.

It localises to the membrane. It catalyses the reaction silphinene-15-oate + 2 reduced [NADPH--hemoprotein reductase] + 2 O2 = gamma-lactone-2-keto[5.5.5.5]fenestrane + 2 oxidized [NADPH--hemoprotein reductase] + 3 H2O + H(+). It participates in secondary metabolite biosynthesis; terpenoid biosynthesis. In terms of biological role, cytochrome P450 monooxygenase; part of the gene cluster that mediates the biosynthesis of penifulvin A, a potent insecticidal sesquiterpene that features a [5.5.5.6]dioxafenestrane ring. Within the pathway, peniB catalyzes the multi-step oxidation of silphinene to synthesize gamma-lactone-2-keto[5.5.5.5]fenestrane, including oxidation of the C15 methylgroup in silphinene to form silphinene-15-oic acid, activationof the C1-C2 double bond to form the gamma-lactone-2-hydroxy[5.5.5.5]fenestrane, and dehydrogenation of the hydroxy group at C2 of gamma-lactone-2-hydroxy[5.5.5.5]fenestrane to generate gamma-lactone-2-keto[5.5.5.5]fenestrane. The first step of the pathway is performed by the sesquiterpene cyclase peniA that generates the angular triquinane scaffold silphinene via cyclization of the linear farnesyl pyrophosphate (FPP). The cytochrome P450 monooxygenase peniB and the flavin-dependent monooxygenase peniC then catalyze a series of oxidation reactions to transform silphinene into penifulvin A. In Penicillium patulum (Penicillium griseofulvum), this protein is Cytochrome P450 monooxygenase peniB.